The following is a 349-amino-acid chain: Ion-translocating oxidoreductase complex subunit D (349 aa).

Helical transmembrane passes span 36-56 (CAFF…VALS), 77-99 (SAML…WMIV), and 124-144 (AMAA…TWIA). Thr-185 carries the post-translational modification FMN phosphoryl threonine. A run of 5 helical transmembrane segments spans residues 212-232 (STGV…IVLL), 239-259 (WHIS…GFLL), 265-285 (ASPL…FIAT), 291-311 (ATSP…VYII), and 315-335 (GGYP…APFI).

This sequence belongs to the NqrB/RnfD family. The complex is composed of six subunits: RnfA, RnfB, RnfC, RnfD, RnfE and RnfG. Requires FMN as cofactor.

It is found in the cell inner membrane. In terms of biological role, part of a membrane-bound complex that couples electron transfer with translocation of ions across the membrane. This chain is Ion-translocating oxidoreductase complex subunit D, found in Shewanella oneidensis (strain ATCC 700550 / JCM 31522 / CIP 106686 / LMG 19005 / NCIMB 14063 / MR-1).